The sequence spans 468 residues: GTPase Der (468 aa).

EngA-type G domains are found at residues 3-169 (PVMA…SPPD) and 199-372 (IRLA…KAAT). GTP contacts are provided by residues 9–16 (GRANVGKS), 56–60 (DTGGF), 119–122 (NKAE), 205–212 (GRPNVGKS), 252–256 (DTAGL), and 317–320 (NKWD). Residues 373-457 (CKMSTPVLTR…PLRIELKTSH (85 aa)) enclose the KH-like domain.

It belongs to the TRAFAC class TrmE-Era-EngA-EngB-Septin-like GTPase superfamily. EngA (Der) GTPase family. In terms of assembly, associates with the 50S ribosomal subunit.

In terms of biological role, GTPase that plays an essential role in the late steps of ribosome biogenesis. This chain is GTPase Der, found in Verminephrobacter eiseniae (strain EF01-2).